Consider the following 317-residue polypeptide: Protease 7 (317 aa).

A signal peptide spans 1–20; the sequence is MRAKLLGIVLTTPIAISSFA. The Periplasmic portion of the chain corresponds to 21 to 31; it reads STETLSFTPDN. A beta stranded membrane pass occupies residues 32-41; the sequence is INADISLGTL. At 42-69 the chain is on the extracellular side; that stretch reads SGKTKERVYLAEEGGRKVSQLDWKFNNA. The beta stranded transmembrane segment at 70–78 threads the bilayer; it reads AIIKGAINW. Topologically, residues 79–83 are periplasmic; it reads DLMPQ. A beta stranded membrane pass occupies residues 84 to 92; that stretch reads ISIGAAGWT. The Extracellular segment spans residues 93 to 130; it reads TLGSRGGNMVDQDWMDSSNPGTWTDESRHPDTQLNYAN. Catalysis depends on residues D103 and D105. Residues 131 to 140 form a beta stranded membrane-spanning segment; sequence EFDLNIKGWL. Residues 141 to 145 lie on the Periplasmic side of the membrane; it reads LNEPN. The beta stranded transmembrane segment at 146 to 156 threads the bilayer; that stretch reads YRLGLMAGYQE. At 157–197 the chain is on the extracellular side; sequence SRYSFTARGGSYIYSSEEGFRDDIGSFPNGERAIGYKQRFK. Residues 198–209 traverse the membrane as a beta stranded segment; sequence MPYIGLTGSYRY. The Periplasmic portion of the chain corresponds to 210–211; sequence ED. A beta stranded membrane pass occupies residues 212-221; sequence FELGGTFKYS. The Extracellular portion of the chain corresponds to 222 to 250; that stretch reads GWVESSDNDEHYDPGKRITYRSKVKDQNY. Catalysis depends on residues D230 and H232. Residues 251–261 traverse the membrane as a beta stranded segment; it reads YSVAVNAGYYV. Residues 262-264 are Periplasmic-facing; it reads TPN. Residues 265–274 traverse the membrane as a beta stranded segment; sequence AKVYVEGAWN. At 275–306 the chain is on the extracellular side; sequence RVTNKKGNTSLYDHNNNTSDYSKNGAGIENYN. A beta stranded transmembrane segment spans residues 307–316; sequence FITTAGLKYT. F317 is a topological domain (periplasmic).

Belongs to the peptidase A26 family. In terms of assembly, homopentamer.

The protein localises to the cell outer membrane. It catalyses the reaction Has a virtual requirement for Arg in the P1 position and a slightly less stringent preference for this residue in the P1' position, which can also contain Lys, Gly or Val.. Inhibited by zinc. Functionally, protease that can cleave T7 RNA polymerase, ferric enterobactin receptor protein (FEP), antimicrobial peptide protamine and other proteins. This protease has a specificity for paired basic residues. The protein is Protease 7 (ompT) of Escherichia coli (strain K12).